The sequence spans 213 residues: Membrane-spanning 4-domains subfamily A member 3 (213 aa).

At 1–26 (MKPEETGGSVYQPLDESRHVQRGVLQ) the chain is on the cytoplasmic side. Residues 27 to 47 (ALGAIQILNGILILALGIFLV) traverse the membrane as a helical segment. The Extracellular portion of the chain corresponds to 48-58 (CLQHVSHHFRH). A helical transmembrane segment spans residues 59 to 79 (FFFFTFYTGYPLWGAVFFISS). The Cytoplasmic segment spans residues 80–97 (GSLTVAAGRNPTRMLMQN). The chain crosses the membrane as a helical span at residues 98–118 (SFGINIASTTIAFVGTVFLSV). The Extracellular segment spans residues 119 to 148 (HLAFNTQAFKGCQSSPSPDVCISLGSSSDG). Residues 149-169 (LVSLMLILTLLELSVTISISA) form a helical membrane-spanning segment. Topologically, residues 170–213 (MWCLGNVCGLREAITSPPNSVESGILPEGSDSENLNTQPQASEE) are cytoplasmic. Residues 189 to 213 (SVESGILPEGSDSENLNTQPQASEE) are disordered. Positions 201-213 (SENLNTQPQASEE) are enriched in polar residues.

It belongs to the MS4A family. Interacts with CDKN3. Interacts with CDKN3-CDK2 complexes through its binding to CDKN3; this interaction facilitates dissociation of cyclin A from CDKN3-CDK2 complexes. Expressed at low levels only in specific immune tissues, such as, spleen, bone marrow and peripheral blood leukocytes.

Its subcellular location is the membrane. Functionally, hematopoietic modulator for the G1-S cell cycle transition. Modulates the level of phosphorylation of cyclin-dependent kinase 2 (CDK2) through its direct binding to cyclin-dependent kinase inhibitor 3 (CDKN3/KAP). The sequence is that of Membrane-spanning 4-domains subfamily A member 3 (Ms4a3) from Mus musculus (Mouse).